The sequence spans 403 residues: Aspartic endopeptidase PEP1 (403 aa).

The signal sequence occupies residues 1–20 (MVQISQIGAVLAVCSTLTVA). Residues 21-67 (APTKGKARFNVPQVAVPMKAVHHPAVAYARALHKFGMKVPKAVSDAA) constitute a propeptide, activation peptide. A Peptidase A1 domain is found at 82–400 (YVTQVTVGQG…DTEGPRIGFA (319 aa)). Asp-98 is a catalytic residue. Residues Asn-159 and Asn-270 are each glycosylated (N-linked (GlcNAc...) asparagine). Residue Asp-293 is part of the active site. An intrachain disulfide couples Cys-329 to Cys-361.

It belongs to the peptidase A1 family.

The protein resides in the secreted. The enzyme catalyses Hydrolysis of proteins with broad specificity. Generally favors hydrophobic residues in P1 and P1', but also accepts Lys in P1, which leads to activation of trypsinogen. Does not clot milk.. Functionally, secreted aspartic endopeptidase that allows assimilation of proteinaceous substrates. Can catalyze hydrolysis of the major structural proteins of basement membrane, elastin, collagen, and laminin. Thought to play a significant role in virulence. In terms of biological role, can catalyze hydrolysis of the major structural proteins of basement membrane, elastin, collagen, and laminin. Thought to play a significant role in virulence. The sequence is that of Aspartic endopeptidase PEP1 (PEP1) from Trichophyton verrucosum (strain HKI 0517).